The following is a 337-amino-acid chain: DNA-directed RNA polymerase subunit alpha (337 aa).

The interval 1–233 (MIQKNWQELI…DQLSLFVNFE (233 aa)) is alpha N-terminal domain (alpha-NTD). The alpha C-terminal domain (alpha-CTD) stretch occupies residues 249–337 (FNPALLKKVD…DLAKRYEDQY (89 aa)).

The protein belongs to the RNA polymerase alpha chain family. In terms of assembly, homodimer. The RNAP catalytic core consists of 2 alpha, 1 beta, 1 beta' and 1 omega subunit. When a sigma factor is associated with the core the holoenzyme is formed, which can initiate transcription.

It carries out the reaction RNA(n) + a ribonucleoside 5'-triphosphate = RNA(n+1) + diphosphate. DNA-dependent RNA polymerase catalyzes the transcription of DNA into RNA using the four ribonucleoside triphosphates as substrates. This Bartonella quintana (strain Toulouse) (Rochalimaea quintana) protein is DNA-directed RNA polymerase subunit alpha.